The chain runs to 280 residues: Putative ABC transporter ATP-binding protein PYRAB03730 (280 aa).

An ABC transporter domain is found at 4–244 (IEVENVSFKY…VEFLERIGIR (241 aa)). 38–45 (GPSGSGKS) provides a ligand contact to ATP.

The protein belongs to the ABC transporter superfamily.

The protein resides in the cell membrane. In terms of biological role, probably part of an ABC transporter complex. Responsible for energy coupling to the transport system. This chain is Putative ABC transporter ATP-binding protein PYRAB03730, found in Pyrococcus abyssi (strain GE5 / Orsay).